The primary structure comprises 403 residues: Tyrosine--tRNA ligase (403 aa).

The short motif at 45 to 54 is the 'HIGH' region element; that stretch reads PTAPDLHLGH. Positions 229 to 233 match the 'KMSKS' region motif; sequence KMSKS. Residue Lys232 participates in ATP binding. The S4 RNA-binding domain maps to 341 to 402; it reads VALCRLLAEA…GKRRFARITF (62 aa).

This sequence belongs to the class-I aminoacyl-tRNA synthetase family. TyrS type 2 subfamily. In terms of assembly, homodimer.

The protein resides in the cytoplasm. It carries out the reaction tRNA(Tyr) + L-tyrosine + ATP = L-tyrosyl-tRNA(Tyr) + AMP + diphosphate + H(+). Functionally, catalyzes the attachment of tyrosine to tRNA(Tyr) in a two-step reaction: tyrosine is first activated by ATP to form Tyr-AMP and then transferred to the acceptor end of tRNA(Tyr). In Geobacter sulfurreducens (strain ATCC 51573 / DSM 12127 / PCA), this protein is Tyrosine--tRNA ligase.